The following is a 260-amino-acid chain: Dof zinc finger protein DOF1.2 (260 aa).

Residues 38 to 92 (PACPRCASSNTKFCYYNNYSLSQPRYFCKGCRRYWTKGGSLRNIPVGGGCRKRSR) form a Dof-type zinc finger. Zn(2+)-binding residues include Cys-40, Cys-43, Cys-65, and Cys-68. The tract at residues 83–124 (VGGGCRKRSRSRQNSHKRFGRNENRPDGLINQDDGFQSSPPG) is disordered. Residues 87–101 (CRKRSRSRQNSHKRF) show a composition bias toward basic residues.

Its subcellular location is the nucleus. In terms of biological role, transcription factor that binds specifically to a 5'-AA[AG]G-3' consensus core sequence. In Arabidopsis thaliana (Mouse-ear cress), this protein is Dof zinc finger protein DOF1.2 (DOF1.2).